A 612-amino-acid polypeptide reads, in one-letter code: Protein tipD (612 aa).

Residues 95–128 (RNEKKTQQQPPSGSSKMDSSSSSSSSNRVSGMGS) are disordered. Residues 106–128 (SGSSKMDSSSSSSSSNRVSGMGS) are compositionally biased toward low complexity. WD repeat units follow at residues 322 to 361 (GHNS…QKST), 364 to 403 (GASQ…SRHT), 406 to 444 (GHIG…CTRT), 447 to 486 (CFSS…PTQV), 490 to 530 (IHEG…TIRT), 535 to 576 (EYRN…TVKV), and 582 to 611 (NNGS…IIQW).

It belongs to the WD repeat tipD family.

Its function is as follows. Not known; disruption of the gene for tipD results in morphological defects. The sequence is that of Protein tipD (tipD) from Dictyostelium discoideum (Social amoeba).